We begin with the raw amino-acid sequence, 711 residues long: Putative membrane protein ActII-3 (711 aa).

The next 12 membrane-spanning stretches (helical) occupy residues 14–34 (LKWL…PLAG), 175–195 (ADFK…VVTY), 199–219 (LLWL…QAIV), 235–255 (AMIL…LLVA), 281–301 (AIVA…LAAL), 313–333 (VGVL…LVIF), 369–389 (AVWV…VTLN), 516–536 (IIPV…RALV), 540–560 (LLIA…ALFF), 573–593 (FPLW…IFLV), 623–643 (AGLV…VFIA), and 645–665 (LGFT…SVLV). Residues 685–711 (REDPSEDPAVSGMPDSIDSEASTTASR) form a disordered region.

The protein belongs to the resistance-nodulation-cell division (RND) (TC 2.A.6) family. MmpL subfamily.

The protein localises to the cell membrane. This is Putative membrane protein ActII-3 (actII-3) from Streptomyces coelicolor (strain ATCC BAA-471 / A3(2) / M145).